We begin with the raw amino-acid sequence, 149 residues long: C-type lectin domain family 2 member B (149 aa).

At 1 to 7 (MMTKHKK) the chain is on the cytoplasmic side. The chain crosses the membrane as a helical; Signal-anchor for type II membrane protein span at residues 8 to 25 (CFIIVGVLITTNIITLIV). Residues 26-149 (KLTRDSQSLC…RKWICRKRIH (124 aa)) are Extracellular-facing. Cysteine 35 and cysteine 46 form a disulfide bridge. The C-type lectin domain maps to 42–145 (FQNKCYYFSK…CYTERKWICR (104 aa)). Residues asparagine 57, asparagine 62, and asparagine 100 are each glycosylated (N-linked (GlcNAc...) asparagine). Intrachain disulfides connect cysteine 63-cysteine 144 and cysteine 123-cysteine 136.

Homodimer. Interacts with NKp80/KLRF1. (Microbial infection) Ubiquitinated by human herpesvirus 8 protein K5, leading to endolysosomal degradation. Post-translationally, N-linked glycosylated; required to enable surface expression and the extent of surface expression correlates with the number of functional conventional N-glycosylation sites. As to expression, expressed preferentially in lymphoid tissues, and in most hematopoietic cell types.

The protein resides in the cell membrane. It is found in the golgi apparatus membrane. Functionally, membrane-bound protein expressed on myeloid cells which acts as a ligand to stimulate the activating receptor NKp80/KLRF1, expressed on the surface of natural killer (NK) cells. In turn, stimulates NK-cell cytotoxicity and cytokine production leading to the cytolysis of malignant CLEC2B-expressing myeloid cells. This is C-type lectin domain family 2 member B (CLEC2B) from Homo sapiens (Human).